The chain runs to 435 residues: Glutamate-1-semialdehyde 2,1-aminomutase (435 aa).

N6-(pyridoxal phosphate)lysine is present on lysine 266.

It belongs to the class-III pyridoxal-phosphate-dependent aminotransferase family. HemL subfamily. Homodimer. The cofactor is pyridoxal 5'-phosphate.

It localises to the cytoplasm. The catalysed reaction is (S)-4-amino-5-oxopentanoate = 5-aminolevulinate. The protein operates within porphyrin-containing compound metabolism; protoporphyrin-IX biosynthesis; 5-aminolevulinate from L-glutamyl-tRNA(Glu): step 2/2. The chain is Glutamate-1-semialdehyde 2,1-aminomutase from Nitrosomonas europaea (strain ATCC 19718 / CIP 103999 / KCTC 2705 / NBRC 14298).